We begin with the raw amino-acid sequence, 291 residues long: GTP-binding protein RHO4 (291 aa).

The segment covering 14–31 (GNESNIVSQGSPSSSNLP) has biased composition (polar residues). The tract at residues 14–45 (GNESNIVSQGSPSSSNLPESPGTLDEKNLPRL) is disordered. 79 to 86 (GDGAVGKT) contacts GTP. Positions 101–109 (YIPTIFENY) match the Effector region motif. GTP is bound by residues 127–131 (DTAGQ) and 185–188 (LKSD). The disordered stretch occupies residues 250–273 (THTIKNPFKRNTTRSDIDSSTGDT). Phosphoserine occurs at positions 264, 268, and 276. C288 is subject to Cysteine methyl ester. C288 carries S-farnesyl cysteine lipidation. Positions 289 to 291 (IIM) are cleaved as a propeptide — removed in mature form.

The protein belongs to the small GTPase superfamily. Rho family. As to quaternary structure, interacts with BEM4.

The protein resides in the cell membrane. The catalysed reaction is GTP + H2O = GDP + phosphate + H(+). Functionally, plays an important role in cell growth. Required to keep the uninucleated state. May be involved in the organization of the cytoskeleton which affects microtubule functions. Most likely RHO3 and RHO4 of S.cerevisiae regulate partially overlapping but different pathways. This Saccharomyces cerevisiae (strain ATCC 204508 / S288c) (Baker's yeast) protein is GTP-binding protein RHO4 (RHO4).